The primary structure comprises 1890 residues: Putative aminopeptidase-2 (1890 aa).

The signal sequence occupies residues 1-20 (MRRKLLLLLCFIGLFSLIST). A glycan (N-linked (GlcNAc...) asparagine) is linked at Asn-110. Residues Glu-220 and 354-358 (GAMEN) contribute to the substrate site. His-390 provides a ligand contact to Zn(2+). The active-site Proton acceptor is the Glu-391. The Zn(2+) site is built by His-394 and Glu-413. 7 N-linked (GlcNAc...) asparagine glycosylation sites follow: Asn-534, Asn-581, Asn-785, Asn-803, Asn-914, Asn-1024, and Asn-1094. Glu-1143 is a substrate binding site. Asn-1245 carries N-linked (GlcNAc...) asparagine glycosylation. Substrate is bound at residue 1280–1284 (GAMEN). A Zn(2+)-binding site is contributed by His-1316. Glu-1317 serves as the catalytic Proton acceptor. 2 residues coordinate Zn(2+): His-1320 and Glu-1339. Asn-1451, Asn-1521, Asn-1826, and Asn-1841 each carry an N-linked (GlcNAc...) asparagine glycan.

The protein belongs to the peptidase M1 family. The cofactor is Zn(2+).

Putative aminopeptidase which plays a role in oocyte maturation. This Caenorhabditis elegans protein is Putative aminopeptidase-2.